Consider the following 406-residue polypeptide: N-acetylmuramoyl-L-alanine amidase CwlM (406 aa).

Peptidoglycan-binding domain regions lie at residues 18-83 (SAAV…YRAL) and 105-160 (GDDV…LRSL). In terms of domain architecture, MurNAc-LAA spans 193-370 (IIIDPGRGGV…IAEGILAAVK (178 aa)).

This sequence belongs to the N-acetylmuramoyl-L-alanine amidase 3 family.

The protein localises to the periplasm. It carries out the reaction Hydrolyzes the link between N-acetylmuramoyl residues and L-amino acid residues in certain cell-wall glycopeptides.. It functions in the pathway cell wall degradation; peptidoglycan degradation. Functionally, cell-wall hydrolase that hydrolyzes the amide bond between N-acetylmuramic acid and L-alanine in cell-wall glycopeptides. Is able to lyse whole mycobacteria, release peptidoglycan from the cell wall of M.luteus and M.smegmatis, and cleave N-acetylmuramoyl-L-alanyl-D-isoglutamine, releasing free N-acetylmuramic acid and dipeptide. This is N-acetylmuramoyl-L-alanine amidase CwlM from Mycobacterium tuberculosis (strain ATCC 25618 / H37Rv).